The primary structure comprises 125 residues: Photoactive yellow protein (125 aa).

A PAS domain is found at 23–86 (LNQLAFGAIQ…GRFKEGVANG (64 aa)). Cysteine 69 carries the post-translational modification S-(4-hydroxycinnamyl)cysteine.

The protein belongs to the photoactive yellow protein family. In terms of processing, the 4-hydroxycinnamic acid (p-coumaric acid) chromophore is covalently bound via a thioester linkage.

Photoactive blue light protein. Probably functions as a photoreceptor for a negative phototaxis response. This chain is Photoactive yellow protein (pyp), found in Halochromatium salexigens (Chromatium salexigens).